The sequence spans 549 residues: Glucose-6-phosphate isomerase (549 aa).

Catalysis depends on E355, which acts as the Proton donor. Active-site residues include H386 and K514.

Belongs to the GPI family.

The protein resides in the cytoplasm. It carries out the reaction alpha-D-glucose 6-phosphate = beta-D-fructose 6-phosphate. It functions in the pathway carbohydrate biosynthesis; gluconeogenesis. The protein operates within carbohydrate degradation; glycolysis; D-glyceraldehyde 3-phosphate and glycerone phosphate from D-glucose: step 2/4. Catalyzes the reversible isomerization of glucose-6-phosphate to fructose-6-phosphate. This is Glucose-6-phosphate isomerase from Salmonella choleraesuis (strain SC-B67).